Consider the following 46-residue polypeptide: U-limacoditoxin(6)-Dv61 (46 aa).

A signal peptide spans 1–19 (MSKLLVLLMTTALATLAQA).

The protein belongs to the limacoditoxin-6 family. In terms of tissue distribution, expressed by the venom secretory cell of the spine. The spine is a cuticular structure containing a single large nucleated venom-secreting cell at its base. It is an independent unit capable of producing, storing and injecting venom. On the back of D.vulnerans caterpillars, spines are grouped together by 50 to 100 to form scoli, of which there are eight in D.vulnerans.

Its subcellular location is the secreted. Probable toxin. Does not show insecticidal, antimicrobial and antiparasitic activities. Does not induce increase in intracellular calcium in mouse DRG neurons, suggesting that it does not induce pain. This Doratifera vulnerans (Mottled cup moth) protein is U-limacoditoxin(6)-Dv61.